The primary structure comprises 242 residues: Ribose-5-phosphate isomerase A (242 aa).

Substrate contacts are provided by residues 39-42 (SGST), 95-98 (DGAD), and 108-111 (KGGG). The active-site Proton acceptor is the E117. K135 lines the substrate pocket.

The protein belongs to the ribose 5-phosphate isomerase family. Homodimer.

It catalyses the reaction aldehydo-D-ribose 5-phosphate = D-ribulose 5-phosphate. It participates in carbohydrate degradation; pentose phosphate pathway; D-ribose 5-phosphate from D-ribulose 5-phosphate (non-oxidative stage): step 1/1. Its function is as follows. Catalyzes the reversible conversion of ribose-5-phosphate to ribulose 5-phosphate. The polypeptide is Ribose-5-phosphate isomerase A (Chlamydia trachomatis serovar A (strain ATCC VR-571B / DSM 19440 / HAR-13)).